A 450-amino-acid chain; its full sequence is Bifunctional protein GlmU (450 aa).

Residues 1 to 229 (MRRHAIILAA…VEEIMGVNDR (229 aa)) form a pyrophosphorylase region. UDP-N-acetyl-alpha-D-glucosamine-binding positions include 8–11 (LAAG), K22, Q72, and 77–78 (GT). D102 contributes to the Mg(2+) binding site. Residues G139, E154, and N227 each coordinate UDP-N-acetyl-alpha-D-glucosamine. Position 227 (N227) interacts with Mg(2+). Residues 230 to 250 (VMLSQAEKAMQRRTNHYHMLN) form a linker region. An N-acetyltransferase region spans residues 251 to 450 (GVTIIDPDST…RQTTKEGYRK (200 aa)). The UDP-N-acetyl-alpha-D-glucosamine site is built by R332 and K350. H362 acts as the Proton acceptor in catalysis. Residues Y365 and N376 each coordinate UDP-N-acetyl-alpha-D-glucosamine. Acetyl-CoA is bound by residues 385–386 (NY), A422, and R439.

The protein in the N-terminal section; belongs to the N-acetylglucosamine-1-phosphate uridyltransferase family. In the C-terminal section; belongs to the transferase hexapeptide repeat family. As to quaternary structure, homotrimer. Requires Mg(2+) as cofactor.

It localises to the cytoplasm. The enzyme catalyses alpha-D-glucosamine 1-phosphate + acetyl-CoA = N-acetyl-alpha-D-glucosamine 1-phosphate + CoA + H(+). It carries out the reaction N-acetyl-alpha-D-glucosamine 1-phosphate + UTP + H(+) = UDP-N-acetyl-alpha-D-glucosamine + diphosphate. It participates in nucleotide-sugar biosynthesis; UDP-N-acetyl-alpha-D-glucosamine biosynthesis; N-acetyl-alpha-D-glucosamine 1-phosphate from alpha-D-glucosamine 6-phosphate (route II): step 2/2. It functions in the pathway nucleotide-sugar biosynthesis; UDP-N-acetyl-alpha-D-glucosamine biosynthesis; UDP-N-acetyl-alpha-D-glucosamine from N-acetyl-alpha-D-glucosamine 1-phosphate: step 1/1. The protein operates within bacterial outer membrane biogenesis; LPS lipid A biosynthesis. In terms of biological role, catalyzes the last two sequential reactions in the de novo biosynthetic pathway for UDP-N-acetylglucosamine (UDP-GlcNAc). The C-terminal domain catalyzes the transfer of acetyl group from acetyl coenzyme A to glucosamine-1-phosphate (GlcN-1-P) to produce N-acetylglucosamine-1-phosphate (GlcNAc-1-P), which is converted into UDP-GlcNAc by the transfer of uridine 5-monophosphate (from uridine 5-triphosphate), a reaction catalyzed by the N-terminal domain. This Staphylococcus aureus (strain Mu50 / ATCC 700699) protein is Bifunctional protein GlmU.